The following is a 284-amino-acid chain: Deoxyribonuclease-1 (284 aa).

An N-terminal signal peptide occupies residues 1 to 22 (MRYTGLMGTLLTLVNLLQLAGT). Asn-40 is a glycosylation site (N-linked (GlcNAc...) asparagine). The active site involves Glu-100. Cys-123 and Cys-126 are disulfide-bonded. Asn-128 carries N-linked (GlcNAc...) asparagine glycosylation. Residue His-156 is part of the active site. Cys-195 and Cys-231 are joined by a disulfide.

The protein belongs to the DNase I family. Ca(2+) serves as cofactor. The cofactor is Mg(2+). In terms of processing, N-glycosylated. In terms of tissue distribution, highly expressed in the parotid and submandibular gland as well as in the kidney and duodenum (at protein level). Expressed at intermediate level in the ileum, mesenterial lymph nodes, liver, ventral prostate, epididymis, ovary and stomach (at protein level). Expressed at low level in the sublingual, preputial, coagulation and pituitary gland (at protein level). Also present in the lachrymal and thyroid glands, striated muscle, intestine, the urinary bladder and the eye.

It localises to the secreted. It is found in the zymogen granule. The protein resides in the nucleus envelope. The enzyme catalyses Endonucleolytic cleavage to 5'-phosphodinucleotide and 5'-phosphooligonucleotide end-products.. In terms of biological role, serum endocuclease secreted into body fluids by a wide variety of exocrine and endocrine organs. Expressed by non-hematopoietic tissues and preferentially cleaves protein-free DNA. Among other functions, seems to be involved in cell death by apoptosis. Binds specifically to G-actin and blocks actin polymerization. Together with DNASE1L3, plays a key role in degrading neutrophil extracellular traps (NETs). NETs are mainly composed of DNA fibers and are released by neutrophils to bind pathogens during inflammation. Degradation of intravascular NETs by DNASE1 and DNASE1L3 is required to prevent formation of clots that obstruct blood vessels and cause organ damage following inflammation. The protein is Deoxyribonuclease-1 of Mus musculus (Mouse).